The chain runs to 185 residues: ATP synthase subunit delta (185 aa).

It belongs to the ATPase delta chain family. In terms of assembly, F-type ATPases have 2 components, F(1) - the catalytic core - and F(0) - the membrane proton channel. F(1) has five subunits: alpha(3), beta(3), gamma(1), delta(1), epsilon(1). CF(0) has four main subunits: a(1), b(1), b'(1) and c(10-14). The alpha and beta chains form an alternating ring which encloses part of the gamma chain. F(1) is attached to F(0) by a central stalk formed by the gamma and epsilon chains, while a peripheral stalk is formed by the delta, b and b' chains.

It is found in the cellular thylakoid membrane. F(1)F(0) ATP synthase produces ATP from ADP in the presence of a proton or sodium gradient. F-type ATPases consist of two structural domains, F(1) containing the extramembraneous catalytic core and F(0) containing the membrane proton channel, linked together by a central stalk and a peripheral stalk. During catalysis, ATP synthesis in the catalytic domain of F(1) is coupled via a rotary mechanism of the central stalk subunits to proton translocation. Functionally, this protein is part of the stalk that links CF(0) to CF(1). It either transmits conformational changes from CF(0) to CF(1) or is implicated in proton conduction. The sequence is that of ATP synthase subunit delta from Crocosphaera subtropica (strain ATCC 51142 / BH68) (Cyanothece sp. (strain ATCC 51142)).